Reading from the N-terminus, the 166-residue chain is Deglycase PH1704 (166 aa).

In terms of domain architecture, PfpI endopeptidase spans Met1–Lys166. The Nucleophile role is filled by Cys100. Residue His101 is part of the active site.

This sequence belongs to the peptidase C56 family. As to quaternary structure, homohexamer formed by a dimer of trimers that assemble into a hollow ring structure.

The protein resides in the cytoplasm. The enzyme catalyses N(omega)-(1-hydroxy-2-oxopropyl)-L-arginyl-[protein] + H2O = lactate + L-arginyl-[protein] + H(+). It carries out the reaction N(6)-(1-hydroxy-2-oxopropyl)-L-lysyl-[protein] + H2O = lactate + L-lysyl-[protein] + H(+). It catalyses the reaction S-(1-hydroxy-2-oxopropyl)-L-cysteinyl-[protein] + H2O = lactate + L-cysteinyl-[protein] + H(+). The catalysed reaction is N(omega)-(1-hydroxy-2-oxoethyl)-L-arginyl-[protein] + H2O = L-arginyl-[protein] + glycolate + H(+). The enzyme catalyses N(6)-(1-hydroxy-2-oxoethyl)-L-lysyl-[protein] + H2O = glycolate + L-lysyl-[protein] + H(+). It carries out the reaction S-(1-hydroxy-2-oxoethyl)-L-cysteinyl-[protein] + H2O = glycolate + L-cysteinyl-[protein] + H(+). In terms of biological role, deglycase that catalyzes the deglycation of the Maillard adducts formed between amino groups of proteins and reactive carbonyl groups of glyoxals. Thus, functions as a protein deglycase that repairs methylglyoxal- and glyoxal-glycated proteins, and releases repaired proteins and lactate or glycolate, respectively. Deglycates cysteine, arginine and lysine residues in proteins, and thus reactivates these proteins by reversing glycation by glyoxals. Acts on early glycation intermediates (hemithioacetals and aminocarbinols), preventing the formation of advanced glycation endproducts (AGE) that cause irreversible damage. Also displays proteolytic activity. This chain is Deglycase PH1704, found in Pyrococcus horikoshii (strain ATCC 700860 / DSM 12428 / JCM 9974 / NBRC 100139 / OT-3).